We begin with the raw amino-acid sequence, 773 residues long: Histone-lysine N-methyltransferase mes-2 (773 aa).

The span at 1–13 (MSNSEPSTSTPSG) shows a compositional bias: polar residues. The interval 1–33 (MSNSEPSTSTPSGKTKKRGKKCETSMGKSKKSK) is disordered. The tract at residues 1-194 (MSNSEPSTST…TPDQLRLTHM (194 aa)) is interaction with mes-6. In terms of domain architecture, CXC spans 505 to 614 (IREDDMRDSQ…SNIIKCRNFG (110 aa)). One can recognise an SET domain in the interval 616 to 737 (TRMIQKRTYC…ISEELTFDYS (122 aa)). The tract at residues 749–773 (VQTKERSEKPSRPKSQKLSKPMTSE) is disordered. Residues 750–759 (QTKERSEKPS) show a composition bias toward basic and acidic residues.

It belongs to the class V-like SAM-binding methyltransferase superfamily. Histone-lysine methyltransferase family. EZ subfamily. Interacts directly with mes-6 via its N-terminal domain. Forms a heterotrimeric complex with mes-3 and mes-6. Does not interact with mes-4. As to expression, in adults, it is predominantly expressed in the germline, and weakly expressed in intestinal cells. Expressed in the hypoderm.

It is found in the nucleus. It catalyses the reaction L-lysyl(27)-[histone H3] + 3 S-adenosyl-L-methionine = N(6),N(6),N(6)-trimethyl-L-lysyl(27)-[histone H3] + 3 S-adenosyl-L-homocysteine + 3 H(+). Its function is as follows. Polycomb group (PcG) protein. Catalytic subunit of a the mes-2/mes-3/mes-6 complex, which methylates 'Lys-27' of histone H3, leading to transcriptional repression of the affected target genes. PcG proteins act by forming multiprotein complexes, which are required to maintain the transcriptionally repressive state of homeotic genes throughout development. In association with the nfya-1-NF-Y complex, may play a role in repressing the expression of the homeobox protein egl-5 in tissues such as the head. PcG proteins are not required to initiate repression, but to maintain it during later stages of development. The mes-2/mes-3/mes-6 complex may participate in the global inactivation of the X chromosomes in germline cells. This complex is required to exclude mes-4 from the inactivated X-chromosomes in germline cells. Required for small-RNA-induced H3K27 trimethylation. Involved in the negative regulation of lifespan in a germline-independent fashion. The chain is Histone-lysine N-methyltransferase mes-2 from Caenorhabditis elegans.